The chain runs to 1165 residues: TBC1 domain family member 1 (1165 aa).

S146 carries the phosphoserine modification. Residues 207–234 (FSSDQSRSALQPPGDGERGPRPMRKSFS) are disordered. The residue at position 232 (S232) is a Phosphoserine; by PKB/AKT1. Residue S234 is modified to Phosphoserine; by AMPK. In terms of domain architecture, PID spans 243 to 401 (FRKEFQDAGL…LHKLCERIEG (159 aa)). Position 500 is a phosphoserine (S500). Phosphothreonine; by PKB/AKT1 is present on T502. Phosphoserine is present on residues S504, S522, S524, S562, S563, S567, S568, and S582. Residue T593 is modified to Phosphothreonine. Residue S611 is modified to Phosphoserine. At S624 the chain carries Phosphoserine; by PKB/AKT1. The interval 624–651 (SVSTETPHERKDFESKADHISDASRTPV) is disordered. Basic and acidic residues predominate over residues 629 to 645 (TPHERKDFESKADHISD). S692 and S938 each carry phosphoserine. Positions 797-991 (GVPRHHRGEI…RVFDMIFLQG (195 aa)) constitute a Rab-GAP TBC domain. The residue at position 949 (Y949) is a Phosphotyrosine. A disordered region spans residues 1146–1165 (QTAELGSQESDPTLPKPSGD).

As to quaternary structure, interacts with APPL2 (via BAR domain); interaction is dependent of TBC1D1 phosphorylation at Ser-232; interaction diminishes the phosphorylation of TBC1D1 at Thr-593, resulting in inhibition of SLC2A4/GLUT4 translocation and glucose uptake. Post-translationally, insulin-stimulated phosphorylation by AKT family kinases stimulates SLC2A4/GLUT4 translocation.

The protein resides in the nucleus. In terms of biological role, may act as a GTPase-activating protein for Rab family protein(s). May play a role in the cell cycle and differentiation of various tissues. Involved in the trafficking and translocation of GLUT4-containing vesicles and insulin-stimulated glucose uptake into cells. The protein is TBC1 domain family member 1 (TBC1D1) of Bos taurus (Bovine).